The primary structure comprises 329 residues: Carrier protein YMC2, mitochondrial (329 aa).

Residues Met-1–Arg-27 are disordered. A mitochondrion-targeting transit peptide spans Met-1–Arg-33. Solcar repeat units follow at residues Val-34–Phe-115, Ser-143–Arg-226, and Pro-238–Phe-325. 6 helical membrane passes run Ile-38–Thr-58, Val-84–Val-104, Leu-140–Ala-160, Thr-205–Ala-225, Cys-243–Val-263, and Phe-297–Thr-318.

It belongs to the mitochondrial carrier (TC 2.A.29) family.

The protein localises to the mitochondrion inner membrane. The polypeptide is Carrier protein YMC2, mitochondrial (YMC2) (Saccharomyces cerevisiae (strain ATCC 204508 / S288c) (Baker's yeast)).